Consider the following 1191-residue polypeptide: MEAFEISDFKEHAKKKSMWAGALNKVTISGLMGVFTEDEDLMALPIHRDHCPALLKIFDELIVNATDHERACHSKTKKVTYIKISFDKGVFACENDGPGIPIAKHEQASLIAKRDVYVPEVASCHFLAGTNINKAKDCIKGGTNGVGLKLAMVHSQWAILTTADGAQKYVQHINQRLDIIEPPTITPSREMFTRIELMPVYQELGYAQPLSETEQADLSAWIYLRACQCAAYVGKGTTIYYNDKPCNTGSVMALAKMYTLLSAPNSTIHTTAIKADAKPYSLHPLQVAAVVSPKFKKFEHVSIINGVNCVKGEHVTFLKKTINEMVVKKFQQTIKDKNRKTTLRDSCSNIFVVIVGSIPGIEWTGQRKDELSIAENVFKTHYSIPSSFLTNMTRSIVDILLQSISKKDNHKQVDVDKYTRANAGGKKAQDCMLLAAEGDSALSLVRAGLTLGKSNPSGPSFDFCGMISLGGVIMNACKKVTNITTDSGETIMVRNEQLTNNKVLQGIVQVLGLDFNCHYKTQEERAKLRYGCIVACVDQDLDGCGKILGLLLAYFHLFWPQLIIHGFVKRLLTPLIRVYEKGKTVPVEFYYEQEFDAWAKKQTSLANHTVKYYKGLAAHDTHEVKSMFKHFDNMVYTFTLDDSAKELFHIYFGGESELRKRELCTGVVPLTETQTQSIHSDRQIPCSLHLQVDTKAYKLDAIERQIPNFLDGMTRARRKILAGGLKCFASNNRERKVFQFGGYVADHMFYHHGDMSLNTSIIKAAQYYPGSSHLYPVFIGIGSFGSRHLGGKDAGSPRYISVQLASEFIKTMFPAEDSWLLPYVFEDGQRAEPEYYVPVLPLAIMEYGANPSEGWKYTTWARQLEDILALVRAYVDKNNPKHELLHYAIERKITVLPLRPSNYNFKGHLKRFGQYYYSYGTYVVSEQRNIITITELPLRVPTVAYIESIKKSSNRMAFIEEIIDYSSSETIEILVKLKPNSLNRIVEEFKETEEQDSIENFLRLRNCLHSHLNFVKPKGGIIEFNSYYEILYAWLPYRRDVYQKRLMRERAVLKLRIIMETAIVRYINESADLNLSHYEDEKEASRILSEHGFPPLNQSLITSPEFASIEELNQKALQGCYTYILSLQARELLIAAKTRRVEKIKKMQARLDKVEQLLQESPFPGASVWLEEIDAVEKAIIKGRSTQWKFH.

Residues asparagine 64, asparagine 95, and 142–149 each bind ATP; that span reads GTNGVGLK. Positions 437, 538, and 540 each coordinate Mg(2+). One can recognise a Topo IIA-type catalytic domain in the interval 706 to 1173; it reads IPNFLDGMTR…PGASVWLEEI (468 aa). The active-site O-(5'-phospho-DNA)-tyrosine intermediate is tyrosine 799.

This sequence belongs to the type II topoisomerase family. It depends on Mg(2+) as a cofactor. The cofactor is Mn(2+). Ca(2+) serves as cofactor.

Its subcellular location is the host cytoplasm. It carries out the reaction ATP-dependent breakage, passage and rejoining of double-stranded DNA.. Its function is as follows. Type II topoisomerase. Processively relaxes supercoiled DNA. Displays DNA-supercoiling activity only when associated with the viral histone-like protein. The protein is DNA topoisomerase 2 of Ornithodoros (relapsing fever ticks).